An 85-amino-acid chain; its full sequence is Large ribosomal subunit protein bL27 (85 aa).

The interval 1–22 is disordered; sequence MAHKKAGGSTRNGRDSESKRLG.

Belongs to the bacterial ribosomal protein bL27 family.

This is Large ribosomal subunit protein bL27 from Vibrio vulnificus (strain CMCP6).